The chain runs to 343 residues: Trans-enoyl reductase ACTTS2 (343 aa).

An NADP(+)-binding site is contributed by 42 to 45; sequence GDWK. Residue 128–135 participates in substrate binding; the sequence is VGITTVGQ. NADP(+)-binding positions include 162–165, 185–188, and Tyr203; these read STAT and SPHN. Residue 268 to 272 coordinates substrate; sequence GYTAL. 333 to 334 lines the NADP(+) pocket; sequence VS.

It belongs to the zinc-containing alcohol dehydrogenase family. Monomer.

It functions in the pathway mycotoxin biosynthesis. In terms of biological role, trans-enoyl reductase; part of the gene clusters that mediate the biosynthesis of the host-selective toxins (HSTs) ACT-toxins responsible for brown spot of tangerine disease by the tangerine pathotype which affects tangerines and mandarins. ACT-toxins consist of three moieties, 9,10-epoxy-8-hydroxy-9-methyl-decatrienoic acid (EDA), valine and a polyketide. ACT-toxin I is toxic to both citrus and pear; toxin II the 5''-deoxy derivative of ACT-toxin I, is highly toxic to pear and slightly toxic to citrus. On cellular level, ACT-toxins affect plasma membrane of susceptible cells and cause a sudden increase in loss of K(+) after a few minutes of toxin treatment. The acyl-CoA ligase ACTT1, the hydrolase ACTT2, the enoyl-CoA hydratases ACTT3 and ACTT6, and the acyl-CoA synthetase ACTT5 are all involved in the biosynthesis of the AK-, AF- and ACT-toxin common 9,10-epoxy-8-hydroxy-9-methyl-decatrienoic acid (EDA) structural moiety. The exact role of each enzyme, and of additional enzymes identified within the AF-toxin clusters have still to be determined. On the other hand, ACTTS1 to ACTTS4 are specific to the tangerine pathotype. The function of ACTTS3 is to elongate the polyketide chain portion of ACT-toxin that is unique to this toxin. The enoyl-reductase ACTTS2 might complement the missing enoyl-reductase (ER) domain in ACTTS3 in the synthesis of the polyketide portion of ACT-toxin. The roles of the nonribosomal peptide synthetases-related proteins ACTTS1 and ACTTS4 have also still not been elucidated. In Alternaria alternata (Alternaria rot fungus), this protein is Trans-enoyl reductase ACTTS2.